Here is a 348-residue protein sequence, read N- to C-terminus: Nicotinate-nucleotide--dimethylbenzimidazole phosphoribosyltransferase (348 aa).

Glu-316 serves as the catalytic Proton acceptor.

Belongs to the CobT family.

It catalyses the reaction 5,6-dimethylbenzimidazole + nicotinate beta-D-ribonucleotide = alpha-ribazole 5'-phosphate + nicotinate + H(+). It participates in nucleoside biosynthesis; alpha-ribazole biosynthesis; alpha-ribazole from 5,6-dimethylbenzimidazole: step 1/2. Functionally, catalyzes the synthesis of alpha-ribazole-5'-phosphate from nicotinate mononucleotide (NAMN) and 5,6-dimethylbenzimidazole (DMB). This Xanthomonas oryzae pv. oryzae (strain PXO99A) protein is Nicotinate-nucleotide--dimethylbenzimidazole phosphoribosyltransferase.